Here is a 424-residue protein sequence, read N- to C-terminus: Histidine--tRNA ligase (424 aa).

This sequence belongs to the class-II aminoacyl-tRNA synthetase family. In terms of assembly, homodimer.

It is found in the cytoplasm. It carries out the reaction tRNA(His) + L-histidine + ATP = L-histidyl-tRNA(His) + AMP + diphosphate + H(+). The polypeptide is Histidine--tRNA ligase (Edwardsiella ictaluri (strain 93-146)).